A 174-amino-acid polypeptide reads, in one-letter code: Crossover junction endodeoxyribonuclease RuvC (174 aa).

Catalysis depends on residues aspartate 8, glutamate 69, and aspartate 141. Positions 8, 69, and 141 each coordinate Mg(2+).

This sequence belongs to the RuvC family. As to quaternary structure, homodimer which binds Holliday junction (HJ) DNA. The HJ becomes 2-fold symmetrical on binding to RuvC with unstacked arms; it has a different conformation from HJ DNA in complex with RuvA. In the full resolvosome a probable DNA-RuvA(4)-RuvB(12)-RuvC(2) complex forms which resolves the HJ. Requires Mg(2+) as cofactor.

The protein localises to the cytoplasm. It carries out the reaction Endonucleolytic cleavage at a junction such as a reciprocal single-stranded crossover between two homologous DNA duplexes (Holliday junction).. The RuvA-RuvB-RuvC complex processes Holliday junction (HJ) DNA during genetic recombination and DNA repair. Endonuclease that resolves HJ intermediates. Cleaves cruciform DNA by making single-stranded nicks across the HJ at symmetrical positions within the homologous arms, yielding a 5'-phosphate and a 3'-hydroxyl group; requires a central core of homology in the junction. The consensus cleavage sequence is 5'-(A/T)TT(C/G)-3'. Cleavage occurs on the 3'-side of the TT dinucleotide at the point of strand exchange. HJ branch migration catalyzed by RuvA-RuvB allows RuvC to scan DNA until it finds its consensus sequence, where it cleaves and resolves the cruciform DNA. The protein is Crossover junction endodeoxyribonuclease RuvC of Xanthomonas oryzae pv. oryzae (strain PXO99A).